A 467-amino-acid chain; its full sequence is Thiohydroximate-O-sulfate sulfur/sulfate-lyase (nitrile-forming) NSP3 (467 aa).

Positions 2-143 (AQKLVAQGGE…LHSLGAYVSL (142 aa)) constitute a Jacalin-type lectin domain. Kelch repeat units lie at residues 177-225 (KIYS…VRMV), 230-276 (TLYT…SMAA), 280-329 (NVYV…VVQG), 331-375 (VWIV…ASAA), and 379-434 (HIVI…ASTT). The active-site Proton donor is the Arg-237. Residues Arg-237, Ser-270, Arg-292, Gly-321, and Val-370 each contribute to the a (Z)-N-(sulfonatooxy)alkanimidothioate site. Residue Arg-292 is the Proton donor of the active site. Fe(2+)-binding residues include Glu-386, Asp-390, and His-394. Residue Trp-429 participates in a (Z)-N-(sulfonatooxy)alkanimidothioate binding.

The protein belongs to the jacalin lectin family. Requires Fe(2+) as cofactor. Mainly expressed in roots, and, at low levels, in seedlings and leaves. Observed in seeds.

The catalysed reaction is a (Z)-N-(sulfonatooxy)alkanimidothioate = a nitrile + sulfur + sulfate. It carries out the reaction (Z)-phenyl-N-(sulfonatooxy)methanimidothioate = phenylacetonitrile + sulfur + sulfate. The enzyme catalyses (Z)-N-(sulfonatooxy)prop-2-enimidothioate = but-3-enenitrile + sulfur + sulfate. In terms of biological role, specifier protein responsible for constitutive and herbivore-induced simple nitrile formation, especially in roots. Promotes simple nitriles, but not epithionitrile or thiocyanate formation. Converts allylglucosinolate and benzylglucosinolate (glucotropaeolin) to their corresponding simple nitriles in the presence of myrosinase. The protein is Thiohydroximate-O-sulfate sulfur/sulfate-lyase (nitrile-forming) NSP3 of Arabidopsis thaliana (Mouse-ear cress).